The following is a 200-amino-acid chain: Holliday junction resolvase RecU (200 aa).

Mg(2+) contacts are provided by Thr-82, Asp-84, Glu-97, and Gln-116.

This sequence belongs to the RecU family. The cofactor is Mg(2+).

The protein resides in the cytoplasm. It carries out the reaction Endonucleolytic cleavage at a junction such as a reciprocal single-stranded crossover between two homologous DNA duplexes (Holliday junction).. Functionally, endonuclease that resolves Holliday junction intermediates in genetic recombination. Cleaves mobile four-strand junctions by introducing symmetrical nicks in paired strands. Promotes annealing of linear ssDNA with homologous dsDNA. Required for DNA repair, homologous recombination and chromosome segregation. In Streptococcus sanguinis (strain SK36), this protein is Holliday junction resolvase RecU.